An 801-amino-acid polypeptide reads, in one-letter code: Phenylalanine--tRNA ligase beta subunit (801 aa).

Residues 39–153 (AEGLSKLVVG…EGAIPGDSIF (115 aa)) form the tRNA-binding domain. The 76-residue stretch at 406–481 (TEPVEVSTTL…RIYGYEKLPT (76 aa)) folds into the B5 domain. The Mg(2+) site is built by aspartate 459, aspartate 465, glutamate 468, and glutamate 469. The 94-residue stretch at 708 to 801 (TKYPSVSRDI…LVEKVNAEIR (94 aa)) folds into the FDX-ACB domain.

It belongs to the phenylalanyl-tRNA synthetase beta subunit family. Type 1 subfamily. Tetramer of two alpha and two beta subunits. It depends on Mg(2+) as a cofactor.

It localises to the cytoplasm. The catalysed reaction is tRNA(Phe) + L-phenylalanine + ATP = L-phenylalanyl-tRNA(Phe) + AMP + diphosphate + H(+). This Streptococcus agalactiae serotype V (strain ATCC BAA-611 / 2603 V/R) protein is Phenylalanine--tRNA ligase beta subunit.